Here is a 449-residue protein sequence, read N- to C-terminus: Glutamate--tRNA ligase 1 (449 aa).

Positions 11–21 (PSPTGSLHVGN) match the 'HIGH' region motif. The 'KMSKS' region motif lies at 242–246 (PLSKR). K245 is an ATP binding site.

Belongs to the class-I aminoacyl-tRNA synthetase family. Glutamate--tRNA ligase type 1 subfamily. As to quaternary structure, monomer.

It is found in the cytoplasm. The enzyme catalyses tRNA(Glu) + L-glutamate + ATP = L-glutamyl-tRNA(Glu) + AMP + diphosphate. Its function is as follows. Catalyzes the attachment of glutamate to tRNA(Glu) in a two-step reaction: glutamate is first activated by ATP to form Glu-AMP and then transferred to the acceptor end of tRNA(Glu). The polypeptide is Glutamate--tRNA ligase 1 (Parvibaculum lavamentivorans (strain DS-1 / DSM 13023 / NCIMB 13966)).